We begin with the raw amino-acid sequence, 528 residues long: MGNCCSHGRDSADNGDALENGASASNAANSTGPTAEASVPQSKHAPPSPPPATKQGPIGPVLGRPMEDVKASYSLGKELGRGQFGVTHLCTQKATGHQFACKTIAKRKLVNKEDIEDVRREVQIMHHLTGQPNIVELKGAYEDKHSVHLVMELCAGGELFDRIIAKGHYSERAAASLLRTIVQIVHTCHSMGVIHRDLKPENFLLLNKDENSPLKATDFGLSVFYKPGEVFKDIVGSAYYIAPEVLKRKYGPEADIWSIGVMLYILLCGVPPFWAESENGIFNAILRGHVDFSSDPWPSISPQAKDLVKKMLNSDPKQRLTAAQVLNHPWIKEDGEAPDVPLDNAVMSRLKQFKAMNNFKKVALRVIAGCLSEEEIMGLKEMFKGMDTDSSGTITLEELRQGLAKQGTRLSEYEVQQLMEAADADGNGTIDYGEFIAATMHINRLDREEHLYSAFQHFDKDNSGYITMEELEQALREFGMNDGRDIKEIISEVDGDNDGRINYDEFVAMMRKGNPDPIPKKRRELSFK.

The tract at residues 1 to 65 (MGNCCSHGRD…GPIGPVLGRP (65 aa)) is disordered. G2 is lipidated: N-myristoyl glycine. Low complexity predominate over residues 20 to 45 (NGASASNAANSTGPTAEASVPQSKHA). In terms of domain architecture, Protein kinase spans 73-331 (YSLGKELGRG…AAQVLNHPWI (259 aa)). Residues 79-87 (LGRGQFGVT) and K102 contribute to the ATP site. D197 serves as the catalytic Proton acceptor. S237 carries the phosphoserine modification. Residues 337-367 (APDVPLDNAVMSRLKQFKAMNNFKKVALRVI) are autoinhibitory domain. EF-hand domains follow at residues 374–409 (EEIMGLKEMFKGMDTDSSGTITLEELRQGLAKQGTR), 410–445 (LSEYEVQQLMEAADADGNGTIDYGEFIAATMHINRL), 446–481 (DREEHLYSAFQHFDKDNSGYITMEELEQALREFGMN), and 485–516 (DIKEIISEVDGDNDGRINYDEFVAMMRKGNPD). Ca(2+) contacts are provided by D387, D389, S391, T393, E398, D423, D425, N427, T429, E434, D459, D461, S463, Y465, E470, D494, D496, D498, R500, and E505.

It belongs to the protein kinase superfamily. Ser/Thr protein kinase family. CDPK subfamily.

Its subcellular location is the membrane. It catalyses the reaction L-seryl-[protein] + ATP = O-phospho-L-seryl-[protein] + ADP + H(+). The enzyme catalyses L-threonyl-[protein] + ATP = O-phospho-L-threonyl-[protein] + ADP + H(+). Its activity is regulated as follows. Activated by calcium. Autophosphorylation may play an important role in the regulation of the kinase activity. In terms of biological role, may play a role in signal transduction pathways that involve calcium as a second messenger. This Arabidopsis thaliana (Mouse-ear cress) protein is Calcium-dependent protein kinase 17 (CPK17).